A 334-amino-acid chain; its full sequence is GTPase Obg (334 aa).

The Obg domain occupies 1-159 (MKFIDQAIIH…RDIQLELMLL (159 aa)). The interval 67-86 (AQNGQNGSSRKSSGKKGDDI) is disordered. Positions 68-77 (QNGQNGSSRK) are enriched in low complexity. The OBG-type G domain maps to 160-333 (ADVGTLGMPN…LCSDITKYLK (174 aa)). Residues 166-173 (GMPNVGKS), 191-195 (FTTLH), 213-216 (DIPG), 283-286 (NKID), and 314-316 (SSM) contribute to the GTP site. Residues serine 173 and threonine 193 each contribute to the Mg(2+) site.

It belongs to the TRAFAC class OBG-HflX-like GTPase superfamily. OBG GTPase family. In terms of assembly, monomer. Mg(2+) serves as cofactor.

The protein localises to the cytoplasm. Functionally, an essential GTPase which binds GTP, GDP and possibly (p)ppGpp with moderate affinity, with high nucleotide exchange rates and a fairly low GTP hydrolysis rate. Plays a role in control of the cell cycle, stress response, ribosome biogenesis and in those bacteria that undergo differentiation, in morphogenesis control. The polypeptide is GTPase Obg (Buchnera aphidicola subsp. Acyrthosiphon pisum (strain 5A)).